A 161-amino-acid polypeptide reads, in one-letter code: Non-specific lipid transfer protein GPI-anchored 24 (161 aa).

The signal sequence occupies residues 1–23 (MAQTTTLILLLATLLVAATTVSG). 4 disulfide bridges follow: Cys42-Cys79, Cys49-Cys63, Cys64-Cys104, and Cys77-Cys113. Asn92 carries N-linked (GlcNAc...) asparagine glycosylation. Asp138 carries GPI-anchor amidated aspartate lipidation. Residues 139 to 161 (AASKLAGTGLVGIVVITIAAMFY) constitute a propeptide, removed in mature form.

It belongs to the plant LTP family.

The protein localises to the cell membrane. Its function is as follows. Probable lipid transfer protein. The polypeptide is Non-specific lipid transfer protein GPI-anchored 24 (Arabidopsis thaliana (Mouse-ear cress)).